The following is a 150-amino-acid chain: Galactose-binding lectin (150 aa).

Residues H16 and G19 each coordinate D-galactose. N-linked (GlcNAc...) asparagine glycosylation is present at N26. D-galactose is bound by residues N27, 35–37, H64, and G67; that span reads DIH. N74 carries an N-linked (GlcNAc...) asparagine glycan. D-galactose-binding positions include E75, 83 to 85, H108, and G111; that span reads DRH. N118 is a glycosylation site (N-linked (GlcNAc...) asparagine). D-galactose-binding positions include N119 and 127 to 129; that span reads DKH.

As to quaternary structure, monomer in solution. Homodimer in solution. Exists as a monomer in solution when a low concentration (0.001 mg/ml) of it is present. Homodimers start to appear at a concentration of 0.01 mg/ml and tetramers at a concentration of 0.1 mg/ml. As to expression, highly expressed in mantle and to a lesser extent in muscle, hepatopancreas, gill and hemocytes.

Bacterial binding activity is inhibited by D-galactose. Hemagglutinating activity is independent of divalent cations Ca2(+) or Mg2(+). It is strongly inhibited by N-acetyl-D-galactosamine (GalNAc), D-galactose and D-talose, and to a lesser extent by melibiose and raffinose. Also inhibited by glycoprotein asialo-bovine submaxillary mucin (BSM). Not inhibited by D-glucose, D-fucose, D-galactitol, N-acetyl-D-glucosamine or lactose. Fungal binding activity is inhibited by D-galactose. Cytotoxic activity against Raji cell line is completely inhibited by galactose, melibiose and raffinose, but not by glucose or lactose. Galactose inhibits binding to laminin and BSM, but not to collagen, gelatin or fibronectin. Galactose-binding lectin. Binds both alpha and beta anomer of galactose (Gal), but has a stronger interaction with the glycans having alpha Gal at the non-reducing end and binds beta Gal weakly only in highly branched glycans. Has high affinity to Galalpha1-4Galbeta1-4GlcNAc. Binds N-acetyl-2-deoxy-2-amino-galactose (2-deoxy-GalNAc). Binds N-acetylgalactosamine (GalNAc). Binds porcine stomach mucin (PSM) with high affinity. Binds galactosamine. Binds laminin, bovine submaxillary mucin (BSM), fibronectin, type I collagen and gelatin with a decreasing affinity, respectively. Has hemagglutinating activity towards human type A erythrocytes. Also hemagglutinates human type 0, B and AB erythrocytes as well as rabbit and mouse erythrocytes. Agglutinates both Gram-positive and Gram-negative bacteria including B.subtilis ATCC 6633, S.aureus ATCC 21027 and E.coli 3254, respectively. No agglutination activity towards Gram-positive S.amurskyense CMM 3673. Has bacteriostatic activity on S.amurskyense CMM 3673, B.subtilis ATCC 6633, S.aureus ATCC 21027 and E.coli 3254. However, has no agglutination nor bacteriostatic activity on Gram-negative C.scophthalmum CIP 104199 or A.troitsensis KMM 3674. Inhibits growth of fungi from the genera Aspergillus, Penicillium, Trichoderma and st. Mycelia. Inhibits germination of spores and hyphal growth of them. Has dose-dependent cytotoxic effect on the human globotriaosylceramide (Gb3)-expressing Burkitt's lymphoma (Raji) cell line. Binds to Gb3 in these cells leading to activation of caspase-9/3 and PARP. Has dose-dependent cytotoxic effect on the Gb3-expressing human MCF-7 breast cancer cell line. No cytotoxic effect on myelogenous leukemia K562 cell line, which does not express Gb3. Activates immune responses in mice and increases cytokine production of TNF-alpha, IL-6 and MCP-1 in the serum and the peritoneal lavage of mice. Induces TNF-alpha and IL-6 secretion in mouse RAW264.7 macrophages, mouse bone marrow-derived macrophages, human THP-1 macrophages, human peripheral blood mononuclear cells (PBMCs) and human blood monocyte-derived macrophages. TNF-alpha production in macrophages could not be inhibited by GalNAc, GalN or Gal, indicating that induced cytokine production is separate from its sugar binding activity. Increases intracellular reactive oxygen species levels, expression and phosphorylation of protein kinases PKC alpha/delta, expression of COX-2 and NF-kappaB, and activates the MAPK pathway by increasing the phosphorylation of ERK1/2, JNK1/2 and p38 in mouse RAW264.7 macrophages. Induces endotoxin tolerance in lipopolysaccharide(LPS)-activated macrophages by down-regulating IRAK2 expression, reducing JNK1/2 phosphorylation and NF-kappaB activation. Can slightly increase the bactericidal activity of RAW264.7 macrophages. Has DNA-binding activity. Recognizes pathogen-associated molecular patterns (PAMPs) and binds to LPS from E.coli, but has only little binding to beta-1,3-glucan from E.gracilis and peptidoglycan from S.aureus. Activates secretion of TNF-alpha and IFN-gamma by the human peripheral blood cells (HPBCs). May be involved in innate immunity acting as an antibacterial and antifungal agent involved in the recognition and clearance of pathogens. This chain is Galactose-binding lectin, found in Crenomytilus grayanus (Gray mussel).